A 579-amino-acid chain; its full sequence is 3-hydroxy-3-methylglutaryl-coenzyme A reductase (579 aa).

The tract at residues 1–22 (MEVRGGVGQGSAARHPPAPEPS) is disordered. A run of 2 helical transmembrane segments spans residues 36–56 (LPIR…LAYL) and 80–100 (AIFG…IAFV). The linker stretch occupies residues 101 to 153 (QSIVSSGDDDEDFLVGSGSSGSAAAPSRQHAQAPAPCELLGSPAAAPEKMPED). Residues 154–579 (DEEIVASVVA…EKTRQREVDV (426 aa)) are catalytic. The active-site Charge relay system is Glu-247. Asn-311 carries an N-linked (GlcNAc...) asparagine glycan. Residues Lys-379 and Asp-455 each act as charge relay system in the active site. The helical transmembrane segment at 524–544 (LLATVVAGGVLAGELSLLSAL) threads the bilayer. The active-site Proton donor is His-553. The interval 555–579 (KYNRSSKDVSSTTATEKTRQREVDV) is disordered. N-linked (GlcNAc...) asparagine glycosylation is present at Asn-557. Positions 570–579 (EKTRQREVDV) are enriched in basic and acidic residues.

This sequence belongs to the HMG-CoA reductase family.

The protein resides in the endoplasmic reticulum membrane. It catalyses the reaction (R)-mevalonate + 2 NADP(+) + CoA = (3S)-3-hydroxy-3-methylglutaryl-CoA + 2 NADPH + 2 H(+). Its pathway is metabolic intermediate biosynthesis; (R)-mevalonate biosynthesis; (R)-mevalonate from acetyl-CoA: step 3/3. Functionally, catalyzes the synthesis of mevalonate. The specific precursor of all isoprenoid compounds present in plants. In Zea mays (Maize), this protein is 3-hydroxy-3-methylglutaryl-coenzyme A reductase (HMGR).